Here is a 128-residue protein sequence, read N- to C-terminus: Arsenic resistance transcriptional regulator ArsR1 (128 aa).

The region spanning 11 to 103 is the HTH arsR-type domain; that stretch reads MREILTPPIV…AMLKGVVDAN (93 aa). Cysteine 43 and cysteine 45 together coordinate arsenite. Positions 44–67 form a DNA-binding region, H-T-H motif; the sequence is VCELTHALELSQPKISRHLAQLRE.

In terms of assembly, homodimer.

The protein localises to the cytoplasm. Functionally, binds arsenite and regulates the expression of arsenic efflux pumps. In vitro, also binds antimony and bismuth, but not arsenate. This is Arsenic resistance transcriptional regulator ArsR1 from Pseudomonas putida (strain ATCC 47054 / DSM 6125 / CFBP 8728 / NCIMB 11950 / KT2440).